The chain runs to 281 residues: Proteasome subunit beta (281 aa).

Positions Met1–Gly53 are cleaved as a propeptide — removed in mature form; by autocatalysis. Thr54 acts as the Nucleophile in catalysis.

This sequence belongs to the peptidase T1B family. In terms of assembly, the 20S proteasome core is composed of 14 alpha and 14 beta subunits that assemble into four stacked heptameric rings, resulting in a barrel-shaped structure. The two inner rings, each composed of seven catalytic beta subunits, are sandwiched by two outer rings, each composed of seven alpha subunits. The catalytic chamber with the active sites is on the inside of the barrel. Has a gated structure, the ends of the cylinder being occluded by the N-termini of the alpha-subunits. Is capped by the proteasome-associated ATPase, ARC.

The protein resides in the cytoplasm. It carries out the reaction Cleavage of peptide bonds with very broad specificity.. It participates in protein degradation; proteasomal Pup-dependent pathway. With respect to regulation, the formation of the proteasomal ATPase ARC-20S proteasome complex, likely via the docking of the C-termini of ARC into the intersubunit pockets in the alpha-rings, may trigger opening of the gate for substrate entry. Interconversion between the open-gate and close-gate conformations leads to a dynamic regulation of the 20S proteasome proteolysis activity. Its function is as follows. Component of the proteasome core, a large protease complex with broad specificity involved in protein degradation. This chain is Proteasome subunit beta, found in Streptomyces scabiei (strain 87.22).